The chain runs to 82 residues: Antitoxin MazE2 (82 aa).

Probably forms a complex with cognate toxin MazF2.

Its function is as follows. Antitoxin component of a type II toxin-antitoxin (TA) system. Labile antitoxin that binds to cognate MazF2 toxin and counteracts its endoribonuclease activity. The sequence is that of Antitoxin MazE2 (mazE2) from Mycobacterium bovis (strain ATCC BAA-935 / AF2122/97).